The sequence spans 231 residues: Large ribosomal subunit protein uL1 (231 aa).

It belongs to the universal ribosomal protein uL1 family. As to quaternary structure, part of the 50S ribosomal subunit.

Functionally, binds directly to 23S rRNA. The L1 stalk is quite mobile in the ribosome, and is involved in E site tRNA release. Its function is as follows. Protein L1 is also a translational repressor protein, it controls the translation of the L11 operon by binding to its mRNA. This is Large ribosomal subunit protein uL1 from Nitrosococcus oceani (strain ATCC 19707 / BCRC 17464 / JCM 30415 / NCIMB 11848 / C-107).